The primary structure comprises 165 residues: (2E)-enoyl-[ACP] glycyltransferase (165 aa).

The protein belongs to the FcoT family.

It carries out the reaction a (3R)-3-[(carboxymethyl)amino]fatty acid + holo-[ACP] + H(+) = a (2E)-enoyl-[ACP] + glycine + H2O. The catalysed reaction is (3R)-3-[(carboxymethyl)amino]butanoate + holo-[ACP] + H(+) = (2E)-butenoyl-[ACP] + glycine + H2O. Functionally, involved in the biosynthesis of a unique class of isonitrile lipopeptides (INLPs). Catalyzes a Michael addition of glycine to the beta-position of an alpha,beta-unsaturated fatty acyl-[ACP], producing a (3R)-3-[(carboxymethyl)amino]fatty acid. Acts on the (2E)-butenoyl moiety loaded on the acyl-carrier protein ScoB, forming the product (3R)-3-[(carboxymethyl)amino]butanoate released from ScoB. This chain is (2E)-enoyl-[ACP] glycyltransferase, found in Streptomyces coeruleorubidus.